Reading from the N-terminus, the 167-residue chain is Translationally-controlled tumor protein homolog (167 aa).

One can recognise a TCTP domain in the interval 1-167 (MIIYKDIFSN…WKHGIVEEKI (167 aa)). Phosphoserine occurs at positions 9 and 15.

Belongs to the TCTP family. Interacts with the 40S and 60S ribosomal subunits. Interacts with microtubules.

The protein resides in the cytoplasm. The protein localises to the cytoskeleton. It is found in the mitochondrion. Its function is as follows. Involved in protein synthesis. Involved in microtubule stabilization. The protein is Translationally-controlled tumor protein homolog (TMA19) of Saccharomyces cerevisiae (strain ATCC 204508 / S288c) (Baker's yeast).